The chain runs to 309 residues: tRNA dimethylallyltransferase (309 aa).

10-17 provides a ligand contact to ATP; the sequence is GPTAVGKT. Residue 12–17 coordinates substrate; the sequence is TAVGKT. The segment at 35-38 is interaction with substrate tRNA; it reads DSMQ.

The protein belongs to the IPP transferase family. As to quaternary structure, monomer. Mg(2+) is required as a cofactor.

The catalysed reaction is adenosine(37) in tRNA + dimethylallyl diphosphate = N(6)-dimethylallyladenosine(37) in tRNA + diphosphate. Catalyzes the transfer of a dimethylallyl group onto the adenine at position 37 in tRNAs that read codons beginning with uridine, leading to the formation of N6-(dimethylallyl)adenosine (i(6)A). In Clostridium botulinum (strain Alaska E43 / Type E3), this protein is tRNA dimethylallyltransferase.